A 631-amino-acid chain; its full sequence is Chaperone protein HtpG (631 aa).

Residues 1 to 342 (MSEQTANKET…SNDLPLNVSR (342 aa)) are a; substrate-binding. The segment at 343 to 559 (EILQDNKVTQ…DFEMGTQMAK (217 aa)) is b. A c region spans residues 560–631 (LLEAAGQAAP…LSAMNQLLAK (72 aa)).

The protein belongs to the heat shock protein 90 family. As to quaternary structure, homodimer.

The protein resides in the cytoplasm. In terms of biological role, molecular chaperone. Has ATPase activity. The chain is Chaperone protein HtpG from Aliivibrio fischeri (strain ATCC 700601 / ES114) (Vibrio fischeri).